A 94-amino-acid chain; its full sequence is Small ribosomal subunit protein uS17 (94 aa).

Belongs to the universal ribosomal protein uS17 family. Part of the 30S ribosomal subunit.

Its function is as follows. One of the primary rRNA binding proteins, it binds specifically to the 5'-end of 16S ribosomal RNA. The sequence is that of Small ribosomal subunit protein uS17 from Symbiobacterium thermophilum (strain DSM 24528 / JCM 14929 / IAM 14863 / T).